Consider the following 1084-residue polypeptide: Myosin heavy chain, skeletal muscle (1084 aa).

3 disordered regions span residues 1–20 (SAET…KTKE), 270–292 (EIEA…SREL), and 298–317 (RLEE…KKRE). The tract at residues 1 to 258 (SAETEKEMAN…SKIEDEQALM (258 aa)) is alpha-helical tailpiece (S2). The segment at 259–1084 (TNLQRIEELE…DVHSKVISEE (826 aa)) is rodlike tail (S2 and LMM domains). Residues 273–292 (AERASRAKAEKQRSDLSREL) show a composition bias toward basic and acidic residues. Residues 455–1084 (QAFTQQIEGL…DVHSKVISEE (630 aa)) are a coiled coil.

In terms of assembly, muscle myosin is a hexameric protein that consists of 2 heavy chain subunits (MHC), 2 alkali light chain subunits (MLC) and 2 regulatory light chain subunits (MLC-2).

It is found in the cytoplasm. The protein resides in the myofibril. In terms of biological role, muscle contraction. This is Myosin heavy chain, skeletal muscle from Oryctolagus cuniculus (Rabbit).